Here is a 106-residue protein sequence, read N- to C-terminus: Large ribosomal subunit protein uL24 (106 aa).

This sequence belongs to the universal ribosomal protein uL24 family. As to quaternary structure, part of the 50S ribosomal subunit.

In terms of biological role, one of two assembly initiator proteins, it binds directly to the 5'-end of the 23S rRNA, where it nucleates assembly of the 50S subunit. Functionally, one of the proteins that surrounds the polypeptide exit tunnel on the outside of the subunit. The chain is Large ribosomal subunit protein uL24 from Desulforamulus reducens (strain ATCC BAA-1160 / DSM 100696 / MI-1) (Desulfotomaculum reducens).